A 645-amino-acid chain; its full sequence is Threonine--tRNA ligase (645 aa).

In terms of domain architecture, TGS spans 1-63 (MEQINIQFPD…ETDGSIEIVT (63 aa)). A catalytic region spans residues 242-540 (DHRKIGKELE…LTEETKGAFP (299 aa)). Cys-336, His-387, and His-517 together coordinate Zn(2+).

It belongs to the class-II aminoacyl-tRNA synthetase family. Homodimer. Requires Zn(2+) as cofactor.

It localises to the cytoplasm. It carries out the reaction tRNA(Thr) + L-threonine + ATP = L-threonyl-tRNA(Thr) + AMP + diphosphate + H(+). In terms of biological role, catalyzes the attachment of threonine to tRNA(Thr) in a two-step reaction: L-threonine is first activated by ATP to form Thr-AMP and then transferred to the acceptor end of tRNA(Thr). Also edits incorrectly charged L-seryl-tRNA(Thr). The chain is Threonine--tRNA ligase from Staphylococcus aureus (strain bovine RF122 / ET3-1).